A 157-amino-acid chain; its full sequence is Small ribosomal subunit protein uS7 (157 aa).

Belongs to the universal ribosomal protein uS7 family. As to quaternary structure, part of the 30S ribosomal subunit. Contacts proteins S9 and S11.

Its function is as follows. One of the primary rRNA binding proteins, it binds directly to 16S rRNA where it nucleates assembly of the head domain of the 30S subunit. Is located at the subunit interface close to the decoding center, probably blocks exit of the E-site tRNA. In Chloroflexus aggregans (strain MD-66 / DSM 9485), this protein is Small ribosomal subunit protein uS7.